We begin with the raw amino-acid sequence, 312 residues long: Ribosomal protein L11 methyltransferase (312 aa).

Residues T163, G184, D206, and N248 each contribute to the S-adenosyl-L-methionine site.

The protein belongs to the methyltransferase superfamily. PrmA family.

The protein localises to the cytoplasm. It carries out the reaction L-lysyl-[protein] + 3 S-adenosyl-L-methionine = N(6),N(6),N(6)-trimethyl-L-lysyl-[protein] + 3 S-adenosyl-L-homocysteine + 3 H(+). In terms of biological role, methylates ribosomal protein L11. The chain is Ribosomal protein L11 methyltransferase from Clostridium botulinum (strain 657 / Type Ba4).